Consider the following 357-residue polypeptide: MILNKKNIHSKSVMLFCAGIVSLMPLHAIAYLQGEVRTNGGPNIFYAVLDHTTFPNNKAGELATVNFSLPDRYDGTVYCPNSRIYDRALTYFKATTDLPPVGNNFYQLNEYVDIKINFEIWGPNPLPTVPFSDIPNNRNNQQGCRVPSSPKPHISSGSSGQLTFRLRKPIINGVSLNGQSLAQMYAMVSHSGAPKTYGSEPISKLVITSGIITTKDKCIFNNGSPITFDFGNVGNTSDYLNGQNYKITRNIPIKCEGGSFTDPNSRIMFKVQTGSSGIASFDSNYLGTTGSVDRSNLGIVLRDKSGTIIPPNQYFSVGKLNNFNGNWEVSAAPIAKAGSKITEGEFSAHATLIAEFM.

An N-terminal signal peptide occupies residues 1 to 28; that stretch reads MILNKKNIHSKSVMLFCAGIVSLMPLHA.

Its subcellular location is the fimbrium. The sequence is that of Putative minor fimbrial subunit PmfE (pmfE) from Proteus mirabilis (strain HI4320).